Consider the following 1249-residue polypeptide: Protein lingerer (1249 aa).

Residues 1 to 66 form a disordered region; it reads MSTQTRSGGG…VVKAKQPTAE (66 aa). Gly residues-rich tracts occupy residues 7–30 and 38–50; these read SGGG…GAAG and GSTG…GAGG. One can recognise a UBA domain in the interval 84–124; sequence KIQEKIQSLMETTQRSEEEVCCALQECDSDLDRAVIFLLET. 10 disordered regions span residues 132-312, 350-375, 454-506, 549-579, 616-717, 738-922, 1016-1042, 1124-1149, 1164-1186, and 1211-1249; these read TTSK…LKPE, SAGA…ASNV, MPPM…PPTT, YAAA…AVEM, TTGT…TSVS, PYGQ…SLPI, GRFT…TGSG, QQQS…APSM, KQSF…AGTT, and QNMH…TGPN. Positions 186–209 are enriched in gly residues; that stretch reads NRGGSGNQRSGGPGRGGRAGGYRD. Positions 210–227 are enriched in basic and acidic residues; that stretch reads GGGDRDRDRDRNGYDKGG. Gly residues-rich tracts occupy residues 228-240 and 248-269; these read EGGG…GGDG and DGPG…GGPR. The segment covering 350–369 has biased composition (low complexity); the sequence is SAGAGAQQQQSQQSTQTGVP. Residues 457–494 show a composition bias toward polar residues; sequence MNTSSSLSAEQSQYFSTLSSQNSNLQPTPSAVGFQQQP. Low complexity-rich tracts occupy residues 549-559, 616-639, and 647-664; these read YAAAATQQPPV, TTGT…PATV, and QSQL…APQQ. Polar residues predominate over residues 678–705; the sequence is ASSQIMPGQGTTEALSSQNDGLANSYSR. Positions 706 to 717 are enriched in low complexity; that stretch reads TNASGSVSTSVS. Composition is skewed to polar residues over residues 738-769 and 777-809; these read PYGQ…TASY and GYNN…NVNA. The segment covering 811–861 has biased composition (low complexity); it reads QPPSSSVTNNVVPNNNTGNSVGGVSNQSNLPVNNNAVNSSSNNNAGGYLSS. Residues 862-873 show a composition bias toward polar residues; sequence QYPVSQTSSAFP. Composition is skewed to low complexity over residues 874–884, 892–922, and 1023–1034; these read SQQNYQNSSQN, NSNT…SLPI, and NNSSPVSNVPSS. Over residues 1124–1138 the composition is skewed to polar residues; that stretch reads QQQSKGQTVANQQSG. Residues 1216–1249 show a composition bias toward polar residues; it reads DSNSSGQRPQNNNQGKTASKQQGYSASTYWTGPN.

It localises to the cytoplasm. Acts in the nervous system to mediate the control of copulatory organs during courtship. This Anopheles gambiae (African malaria mosquito) protein is Protein lingerer.